The sequence spans 830 residues: Probable glucan 1,3-beta-glucosidase D (830 aa).

The span at 1–34 (MPSQSRSRDRYRGRDTEYTRRRYPDEHDYSHDDH) shows a compositional bias: basic and acidic residues. The segment at 1-279 (MPSQSRSRDR…PPMDARWPKG (279 aa)) is disordered. Residues 1 to 301 (MPSQSRSRDR…GRPFWKQKKW (301 aa)) are Cytoplasmic-facing. Over residues 35 to 51 (DYDYDDDDDDNDDLEQD) the composition is skewed to acidic residues. Composition is skewed to basic and acidic residues over residues 52-98 (VTER…ERRR) and 110-175 (QHRE…KHQS). Low complexity predominate over residues 181–194 (SASHLLSADALARL). Basic and acidic residues-rich tracts occupy residues 198 to 215 (YEKE…AAKA), 228 to 243 (EQER…DRSR), and 253 to 264 (EEGRGPEMEFRR). The helical; Signal-anchor for type II membrane protein transmembrane segment at 302 to 322 (LIGIGVVILILVIVIPVAVVV) threads the bilayer. The Extracellular portion of the chain corresponds to 323–830 (SKKHNDKPNA…PDFGSLPEYY (508 aa)). Residues 327-351 (NDKPNATTTQPDGTTPSNSNLDGLS) are disordered. Polar residues predominate over residues 330–348 (PNATTTQPDGTTPSNSNLD). 6 N-linked (GlcNAc...) asparagine glycosylation sites follow: Asn-331, Asn-376, Asn-381, Asn-393, Asn-546, and Asn-558. Glu-597 acts as the Proton donor in catalysis. Asn-610, Asn-636, Asn-669, and Asn-689 each carry an N-linked (GlcNAc...) asparagine glycan. Glu-701 functions as the Nucleophile in the catalytic mechanism.

Belongs to the glycosyl hydrolase 5 (cellulase A) family.

The protein localises to the cell membrane. It carries out the reaction Successive hydrolysis of beta-D-glucose units from the non-reducing ends of (1-&gt;3)-beta-D-glucans, releasing alpha-glucose.. In terms of biological role, glucosidase involved in the degradation of cellulosic biomass. Active on lichenan. This chain is Probable glucan 1,3-beta-glucosidase D (exgD), found in Aspergillus clavatus (strain ATCC 1007 / CBS 513.65 / DSM 816 / NCTC 3887 / NRRL 1 / QM 1276 / 107).